The sequence spans 2136 residues: Protein Ycf2 (2136 aa).

ATP is bound at residue 1404 to 1411 (GPIETGRS).

It belongs to the Ycf2 family.

The protein resides in the plastid. The protein localises to the chloroplast stroma. Probable ATPase of unknown function. Its presence in a non-photosynthetic plant (Epifagus virginiana) and experiments in tobacco indicate that it has an essential function which is probably not related to photosynthesis. In Marchantia polymorpha (Common liverwort), this protein is Protein Ycf2.